Reading from the N-terminus, the 560-residue chain is Zinc finger protein 250 (560 aa).

A KRAB domain is found at 22-93 (LTFEDVAVLL…DRKGAKKSQG (72 aa)). Glycyl lysine isopeptide (Lys-Gly) (interchain with G-Cter in SUMO2) cross-links involve residues Lys-125, Lys-136, Lys-148, and Lys-162. The C2H2-type 1 zinc finger occupies 199-221 (YMCVECGKCFGRSSHLLQHQRIH). Lys-225 is covalently cross-linked (Glycyl lysine isopeptide (Lys-Gly) (interchain with G-Cter in SUMO2)). 7 consecutive C2H2-type zinc fingers follow at residues 227–249 (YVCS…RRIH), 255–277 (YECN…HKIH), 283–305 (HECL…QRIH), 311–333 (YVCP…QRVH), 339–361 (HRCN…QRIH), 367–389 (YTCS…HNVH), and 395–417 (YECS…ERIH). Lys-421 is covalently cross-linked (Glycyl lysine isopeptide (Lys-Gly) (interchain with G-Cter in SUMO2)). 5 consecutive C2H2-type zinc fingers follow at residues 423–445 (YACY…QRVH), 451–473 (YVCG…ERIH), 479–501 (FQCT…LRTH), 507–529 (YECN…QRIH), and 535–557 (YECG…QKVH).

It belongs to the krueppel C2H2-type zinc-finger protein family.

The protein resides in the nucleus. May be involved in transcriptional regulation. This Homo sapiens (Human) protein is Zinc finger protein 250 (ZNF250).